The following is a 386-amino-acid chain: 2,3-diketo-5-methylthiopentyl-1-phosphate enolase (386 aa).

Lysine 85 functions as the Proton acceptor in the catalytic mechanism. Substrate contacts are provided by residues lysine 131, 157-160 (KDDE), histidine 248, glycine 316, and 338-339 (GT). Positions 157, 159, and 160 each coordinate Mg(2+). Residue lysine 157 is modified to N6-carboxylysine.

This sequence belongs to the RuBisCO large chain family. Type IV subfamily. In terms of assembly, homodimer. Mg(2+) serves as cofactor.

The catalysed reaction is 5-methylsulfanyl-2,3-dioxopentyl phosphate = 2-hydroxy-5-methylsulfanyl-3-oxopent-1-enyl phosphate. Its pathway is amino-acid biosynthesis; L-methionine biosynthesis via salvage pathway; L-methionine from S-methyl-5-thio-alpha-D-ribose 1-phosphate: step 3/6. Catalyzes the enolization of 2,3-diketo-5-methylthiopentyl-1-phosphate (DK-MTP-1-P) into 2-hydroxy-3-keto-5-methylthiopentenyl-1-phosphate (HK-MTPenyl-1-P). The sequence is that of 2,3-diketo-5-methylthiopentyl-1-phosphate enolase (mtnW) from Microcystis aeruginosa.